Consider the following 382-residue polypeptide: Diphosphomevalonate decarboxylase ERG19 (382 aa).

Residues 22–25 (YWGK), Arg-78, 157–162 (SGSACR), and Thr-213 contribute to the (R)-5-diphosphomevalonate site.

Belongs to the diphosphomevalonate decarboxylase family. Homodimer.

The enzyme catalyses (R)-5-diphosphomevalonate + ATP = isopentenyl diphosphate + ADP + phosphate + CO2. Its pathway is isoprenoid biosynthesis; isopentenyl diphosphate biosynthesis via mevalonate pathway; isopentenyl diphosphate from (R)-mevalonate: step 3/3. Its function is as follows. Diphosphomevalonate decarboxylase; part of the second module of ergosterol biosynthesis pathway that includes the middle steps of the pathway. MVD1 converts diphosphomevalonate into isopentenyl diphosphate. The second module is carried out in the vacuole and involves the formation of farnesyl diphosphate, which is also an important intermediate in the biosynthesis of ubiquinone, dolichol, heme and prenylated proteins. Activity by the mevalonate kinase ERG12 (FG05912) first converts mevalonate into 5-phosphomevalonate. 5-phosphomevalonate is then further converted to 5-diphosphomevalonate by the phosphomevalonate kinase ERG8 (FG09764). The diphosphomevalonate decarboxylase ERG19 (FG10424) then produces isopentenyl diphosphate. The isopentenyl-diphosphate delta-isomerase IDI1 (FG09722) then catalyzes the 1,3-allylic rearrangement of the homoallylic substrate isopentenyl (IPP) to its highly electrophilic allylic isomer, dimethylallyl diphosphate (DMAPP). Finally the farnesyl diphosphate synthase ERG20 (FG06784) catalyzes the sequential condensation of isopentenyl pyrophosphate with dimethylallyl pyrophosphate, and then with the resultant geranylpyrophosphate to the ultimate product farnesyl pyrophosphate. This chain is Diphosphomevalonate decarboxylase ERG19, found in Gibberella zeae (strain ATCC MYA-4620 / CBS 123657 / FGSC 9075 / NRRL 31084 / PH-1) (Wheat head blight fungus).